Consider the following 484-residue polypeptide: uncharacterized protein (484 aa).

This sequence to M.thermoautotrophicum MTH1153.

This is an uncharacterized protein from Methanocaldococcus jannaschii (strain ATCC 43067 / DSM 2661 / JAL-1 / JCM 10045 / NBRC 100440) (Methanococcus jannaschii).